A 96-amino-acid polypeptide reads, in one-letter code: Large ribosomal subunit protein bL27 (96 aa).

The propeptide occupies 1 to 9; that stretch reads MLRLDLQFF.

The protein belongs to the bacterial ribosomal protein bL27 family. Post-translationally, the N-terminus is cleaved by ribosomal processing cysteine protease Prp.

This is Large ribosomal subunit protein bL27 from Geobacillus kaustophilus (strain HTA426).